The primary structure comprises 340 residues: Holliday junction branch migration complex subunit RuvB (340 aa).

Positions 1 to 184 (MNENLDPTTK…FGISSRLQYY (184 aa)) are large ATPase domain (RuvB-L). ATP-binding positions include Leu23, Arg24, Gly65, Lys68, Thr69, Thr70, 131–133 (EDF), Arg174, Tyr184, and Arg221. Thr69 is a Mg(2+) binding site. Residues 185-255 (STELLTTIVE…ISKYALKALN (71 aa)) are small ATPAse domain (RuvB-S). The head domain (RuvB-H) stretch occupies residues 258–340 (AHGLDEMDNK…INTNIQGGLF (83 aa)). Arg313 and Arg318 together coordinate DNA.

This sequence belongs to the RuvB family. As to quaternary structure, homohexamer. Forms an RuvA(8)-RuvB(12)-Holliday junction (HJ) complex. HJ DNA is sandwiched between 2 RuvA tetramers; dsDNA enters through RuvA and exits via RuvB. An RuvB hexamer assembles on each DNA strand where it exits the tetramer. Each RuvB hexamer is contacted by two RuvA subunits (via domain III) on 2 adjacent RuvB subunits; this complex drives branch migration. In the full resolvosome a probable DNA-RuvA(4)-RuvB(12)-RuvC(2) complex forms which resolves the HJ.

It localises to the cytoplasm. It carries out the reaction ATP + H2O = ADP + phosphate + H(+). Functionally, the RuvA-RuvB-RuvC complex processes Holliday junction (HJ) DNA during genetic recombination and DNA repair, while the RuvA-RuvB complex plays an important role in the rescue of blocked DNA replication forks via replication fork reversal (RFR). RuvA specifically binds to HJ cruciform DNA, conferring on it an open structure. The RuvB hexamer acts as an ATP-dependent pump, pulling dsDNA into and through the RuvAB complex. RuvB forms 2 homohexamers on either side of HJ DNA bound by 1 or 2 RuvA tetramers; 4 subunits per hexamer contact DNA at a time. Coordinated motions by a converter formed by DNA-disengaged RuvB subunits stimulates ATP hydrolysis and nucleotide exchange. Immobilization of the converter enables RuvB to convert the ATP-contained energy into a lever motion, pulling 2 nucleotides of DNA out of the RuvA tetramer per ATP hydrolyzed, thus driving DNA branch migration. The RuvB motors rotate together with the DNA substrate, which together with the progressing nucleotide cycle form the mechanistic basis for DNA recombination by continuous HJ branch migration. Branch migration allows RuvC to scan DNA until it finds its consensus sequence, where it cleaves and resolves cruciform DNA. In Flavobacterium johnsoniae (strain ATCC 17061 / DSM 2064 / JCM 8514 / BCRC 14874 / CCUG 350202 / NBRC 14942 / NCIMB 11054 / UW101) (Cytophaga johnsonae), this protein is Holliday junction branch migration complex subunit RuvB.